Here is a 208-residue protein sequence, read N- to C-terminus: Pyridoxine/pyridoxamine 5'-phosphate oxidase (208 aa).

FMN-binding positions include 53-58 (RTVLLK), 68-69 (YS), Lys75, and Gln100. Lys58 provides a ligand contact to substrate. 3 residues coordinate substrate: Tyr118, Arg122, and Ser126. Residues 135-136 (QS) and Trp180 each bind FMN. A substrate-binding site is contributed by 186–188 (RLH). Position 190 (Arg190) interacts with FMN.

The protein belongs to the pyridoxamine 5'-phosphate oxidase family. Homodimer. FMN is required as a cofactor.

The catalysed reaction is pyridoxamine 5'-phosphate + O2 + H2O = pyridoxal 5'-phosphate + H2O2 + NH4(+). It catalyses the reaction pyridoxine 5'-phosphate + O2 = pyridoxal 5'-phosphate + H2O2. Its pathway is cofactor metabolism; pyridoxal 5'-phosphate salvage; pyridoxal 5'-phosphate from pyridoxamine 5'-phosphate: step 1/1. The protein operates within cofactor metabolism; pyridoxal 5'-phosphate salvage; pyridoxal 5'-phosphate from pyridoxine 5'-phosphate: step 1/1. Its function is as follows. Catalyzes the oxidation of either pyridoxine 5'-phosphate (PNP) or pyridoxamine 5'-phosphate (PMP) into pyridoxal 5'-phosphate (PLP). The sequence is that of Pyridoxine/pyridoxamine 5'-phosphate oxidase from Xylella fastidiosa (strain Temecula1 / ATCC 700964).